A 392-amino-acid chain; its full sequence is Methylthioribose-1-phosphate isomerase (392 aa).

Catalysis depends on Asp-267, which acts as the Proton donor.

This sequence belongs to the eIF-2B alpha/beta/delta subunits family. MtnA subfamily.

Its subcellular location is the cytoplasm. It localises to the nucleus. The enzyme catalyses 5-(methylsulfanyl)-alpha-D-ribose 1-phosphate = 5-(methylsulfanyl)-D-ribulose 1-phosphate. Its pathway is amino-acid biosynthesis; L-methionine biosynthesis via salvage pathway; L-methionine from S-methyl-5-thio-alpha-D-ribose 1-phosphate: step 1/6. Catalyzes the interconversion of methylthioribose-1-phosphate (MTR-1-P) into methylthioribulose-1-phosphate (MTRu-1-P). This Ajellomyces dermatitidis (strain ER-3 / ATCC MYA-2586) (Blastomyces dermatitidis) protein is Methylthioribose-1-phosphate isomerase.